We begin with the raw amino-acid sequence, 160 residues long: Ribosomal RNA large subunit methyltransferase H (160 aa).

The S-adenosyl-L-methionine site is built by leucine 76 and glycine 108.

The protein belongs to the RNA methyltransferase RlmH family. In terms of assembly, homodimer.

It is found in the cytoplasm. It carries out the reaction pseudouridine(1915) in 23S rRNA + S-adenosyl-L-methionine = N(3)-methylpseudouridine(1915) in 23S rRNA + S-adenosyl-L-homocysteine + H(+). Its function is as follows. Specifically methylates the pseudouridine at position 1915 (m3Psi1915) in 23S rRNA. The chain is Ribosomal RNA large subunit methyltransferase H from Bradyrhizobium sp. (strain BTAi1 / ATCC BAA-1182).